The chain runs to 351 residues: 1-acylglycerol-3-phosphate O-acyltransferase ABHD5 (351 aa).

The region spanning 79–184 is the AB hydrolase-1 domain; that stretch reads PLVLLHGFGG…LILVEPWGFP (106 aa). At Ser124 the chain carries Phosphoserine. An HXXXXD motif motif is present at residues 329-334; the sequence is HYVYAD.

It belongs to the peptidase S33 family. ABHD4/ABHD5 subfamily. In terms of assembly, interacts with ADRP. Interacts with PLIN. Interacts with and PNPLA2. Interacts with PLIN5; promotes interaction with PNPLA2. As to expression, highly expressed in the adipose tissue and testes. Weakly expressed in the liver, muscle, kidney, and heart. Expressed by upper epidermal layers and dermal fibroblasts in skin, hepatocytes and hypothalamus in brain (at protein level).

It is found in the cytoplasm. The protein localises to the lipid droplet. The protein resides in the cytosol. It carries out the reaction a 1-acyl-sn-glycero-3-phosphate + an acyl-CoA = a 1,2-diacyl-sn-glycero-3-phosphate + CoA. It catalyses the reaction 1-(9Z-octadecenoyl)-sn-glycero-3-phosphate + (9Z)-octadecenoyl-CoA = 1,2-di-(9Z-octadecenoyl)-sn-glycero-3-phosphate + CoA. The enzyme catalyses 1-(9Z-octadecenoyl)-sn-glycero-3-phosphate + hexadecanoyl-CoA = 1-(9Z)-octadecenoyl-2-hexadecanoyl-sn-glycero-3-phosphate + CoA. The catalysed reaction is 1-(9Z-octadecenoyl)-sn-glycero-3-phosphate + octadecanoyl-CoA = 1-(9Z-octadecenoyl)-2-octadecanoyl-sn-glycero-3-phosphate + CoA. It carries out the reaction 1-(9Z-octadecenoyl)-sn-glycero-3-phosphate + (5Z,8Z,11Z,14Z)-eicosatetraenoyl-CoA = 1-(9Z)-octadecenoyl-2-(5Z,8Z,11Z,14Z)-eicosatetraenoyl-sn-glycero-3-phosphate + CoA. It catalyses the reaction eicosanoyl-CoA + 1-(9Z-octadecenoyl)-sn-glycero-3-phosphate = 1-(9Z)-octadecenoyl-2-eicosanoyl-sn-glycero-3-phosphate + CoA. The enzyme catalyses 1-hexadecanoyl-sn-glycero-3-phosphate + (9Z)-octadecenoyl-CoA = 1-hexadecanoyl-2-(9Z-octadecenoyl)-sn-glycero-3-phosphate + CoA. The catalysed reaction is 1-octadecanoyl-sn-glycero-3-phosphate + (9Z)-octadecenoyl-CoA = 1-octadecanoyl-2-(9Z-octadecenoyl)-sn-glycero-3-phosphate + CoA. It carries out the reaction 1-(5Z,8Z,11Z,14Z-eicosatetraenoyl)-sn-glycero-3-phosphate + (9Z)-octadecenoyl-CoA = 1-(5Z,8Z,11Z,14Z)-eicosatetraenoyl-2-(9Z)-octadecenoyl-sn-glycero-3-phosphate + CoA. Acyltransferase activity is inhibited by detergents such as Triton X-100 and 3-[(3-cholamidopropyl)dimethylammonio]-1-propanesulfonate (CHAPS). Acyltransferase activity is inhibited by the presence of magnesium and calcium. Its function is as follows. Coenzyme A-dependent lysophosphatidic acid acyltransferase that catalyzes the transfer of an acyl group on a lysophosphatidic acid. Functions preferentially with 1-oleoyl-lysophosphatidic acid followed by 1-palmitoyl-lysophosphatidic acid, 1-stearoyl-lysophosphatidic acid and 1-arachidonoyl-lysophosphatidic acid as lipid acceptor. Functions preferentially with arachidonoyl-CoA followed by oleoyl-CoA as acyl group donors. Functions in phosphatidic acid biosynthesis. May regulate the cellular storage of triacylglycerol through activation of the phospholipase PNPLA2. Involved in keratinocyte differentiation. Regulates lipid droplet fusion. This Mus musculus (Mouse) protein is 1-acylglycerol-3-phosphate O-acyltransferase ABHD5.